Reading from the N-terminus, the 153-residue chain is Transcriptional repressor NrdR (153 aa).

A zinc finger lies at 3–34 (CPYCNADDTKVIDSRLAAEGAQVRRRRQCNQC). Residues 49-139 (PRIIKSNGRI…VYRDFQDIEA (91 aa)) enclose the ATP-cone domain.

Belongs to the NrdR family. Zn(2+) serves as cofactor.

Its function is as follows. Negatively regulates transcription of bacterial ribonucleotide reductase nrd genes and operons by binding to NrdR-boxes. In Psychrobacter sp. (strain PRwf-1), this protein is Transcriptional repressor NrdR.